We begin with the raw amino-acid sequence, 289 residues long: Pantothenate synthetase (289 aa).

Position 30-37 (30-37) interacts with ATP; sequence MGYLHEGH. The Proton donor role is filled by His-37. Residue Gln-61 participates in (R)-pantoate binding. Position 61 (Gln-61) interacts with beta-alanine. 147–150 contacts ATP; the sequence is GLKD. Gln-153 contacts (R)-pantoate. ATP contacts are provided by residues Val-176 and 184–187; that span reads KSSR.

It belongs to the pantothenate synthetase family. As to quaternary structure, homodimer.

Its subcellular location is the cytoplasm. The catalysed reaction is (R)-pantoate + beta-alanine + ATP = (R)-pantothenate + AMP + diphosphate + H(+). It functions in the pathway cofactor biosynthesis; (R)-pantothenate biosynthesis; (R)-pantothenate from (R)-pantoate and beta-alanine: step 1/1. In terms of biological role, catalyzes the condensation of pantoate with beta-alanine in an ATP-dependent reaction via a pantoyl-adenylate intermediate. The polypeptide is Pantothenate synthetase (Geobacillus thermodenitrificans (strain NG80-2)).